The following is a 416-amino-acid chain: Putative competence-damage inducible protein (416 aa).

Belongs to the CinA family.

This is Putative competence-damage inducible protein from Bacillus pumilus (strain SAFR-032).